Here is a 465-residue protein sequence, read N- to C-terminus: Probable oxidoreductase AIM17 (465 aa).

The transit peptide at 1–16 (MLRSNLCRGSRILARL) directs the protein to the mitochondrion. Fe cation is bound by residues His246, Asp248, and His428.

This sequence belongs to the gamma-BBH/TMLD family. It depends on Fe(2+) as a cofactor. The cofactor is L-ascorbate.

It is found in the mitochondrion. The chain is Probable oxidoreductase AIM17 (AIM17) from Saccharomyces cerevisiae (strain ATCC 204508 / S288c) (Baker's yeast).